A 346-amino-acid polypeptide reads, in one-letter code: Heat-inducible transcription repressor HrcA (346 aa).

It belongs to the HrcA family.

Negative regulator of class I heat shock genes (grpE-dnaK-dnaJ and groELS operons). Prevents heat-shock induction of these operons. This chain is Heat-inducible transcription repressor HrcA, found in Pediococcus pentosaceus (strain ATCC 25745 / CCUG 21536 / LMG 10740 / 183-1w).